We begin with the raw amino-acid sequence, 752 residues long: Polyribonucleotide nucleotidyltransferase (752 aa).

D519 and D525 together coordinate Mg(2+). Residues 585–644 (PRVIAVKIPVDKIGEVIGPKGKMINQIQEDTGADISIEDDGTVYIGATNGPSADAARSAI) form the KH domain. Residues 656–728 (GERYLGTVVK…DRGKLSLSPV (73 aa)) enclose the S1 motif domain. The disordered stretch occupies residues 727–752 (PVVAEEEGAEGAERAHATEPAEGAEI).

This sequence belongs to the polyribonucleotide nucleotidyltransferase family. It depends on Mg(2+) as a cofactor.

It localises to the cytoplasm. The enzyme catalyses RNA(n+1) + phosphate = RNA(n) + a ribonucleoside 5'-diphosphate. In terms of biological role, involved in mRNA degradation. Catalyzes the phosphorolysis of single-stranded polyribonucleotides processively in the 3'- to 5'-direction. The sequence is that of Polyribonucleotide nucleotidyltransferase from Pseudarthrobacter chlorophenolicus (strain ATCC 700700 / DSM 12829 / CIP 107037 / JCM 12360 / KCTC 9906 / NCIMB 13794 / A6) (Arthrobacter chlorophenolicus).